The sequence spans 511 residues: GATOR complex protein NPRL3 (511 aa).

The segment at 37-58 (KPATKAPSKDPQPSSSNPGQCV) is disordered.

This sequence belongs to the NPR3 family. As to quaternary structure, probably part of the GATOR complex.

The protein localises to the lysosome membrane. Functionally, as a component of the GATOR complex may function in the amino acid-sensing branch of the TORC1 signaling pathway. The chain is GATOR complex protein NPRL3 (nprl-3) from Caenorhabditis elegans.